The chain runs to 242 residues: Cysteine-rich venom protein VAR11 (242 aa).

An N-terminal signal peptide occupies residues 1-19 (MILLKLYLTLAAILCQSRG). The 129-residue stretch at 41–169 (NKHNDLRRTV…SLKYFQVCQY (129 aa)) folds into the SCP domain. 8 disulfide bridges follow: Cys-77–Cys-156, Cys-95–Cys-170, Cys-151–Cys-167, Cys-189–Cys-196, Cys-192–Cys-201, Cys-205–Cys-237, Cys-214–Cys-231, and Cys-223–Cys-235. In terms of domain architecture, ShKT spans 205–237 (CAYNDDYTSCPDLTKQVGCNHPVTANCKASCQC).

Belongs to the CRISP family. In terms of tissue distribution, expressed by the venom gland.

The protein localises to the secreted. Functionally, blocks ryanodine receptors, and potassium channels. This is Cysteine-rich venom protein VAR11 from Varanus varius (Lace monitor lizard).